Consider the following 57-residue polypeptide: COP9 signalosome complex subunit 9 (57 aa).

This sequence belongs to the CSN9 family. Component of the CSN complex, probably composed of cops1, cops2, cops3, cops4, cops5, cops6, cops7, cops8 and cops9.

The protein resides in the nucleus. It is found in the cytoplasm. It localises to the nucleoplasm. Its function is as follows. Component of the COP9 signalosome complex (CSN), a complex involved in various cellular and developmental processes. The CSN complex is an essential regulator of the ubiquitin (Ubl) conjugation pathway by mediating the deneddylation of the cullin subunits of SCF-type E3 ligase complexes, leading to decrease the Ubl ligase activity. May play a role in cell proliferation. The chain is COP9 signalosome complex subunit 9 from Xenopus laevis (African clawed frog).